A 475-amino-acid polypeptide reads, in one-letter code: Putative response regulator NtrX-like (475 aa).

The 117-residue stretch at 5 to 121 (DVLILDDEES…KLIILLKRAC (117 aa)) folds into the Response regulatory domain. A 4-aspartylphosphate modification is found at aspartate 54. A Sigma-54 factor interaction domain is found at 143-369 (LVGGCSVTLK…LRNVVEWTLI (227 aa)). ATP-binding positions include 171–178 (GKVGSGKE) and 232–241 (ANNGTLYIDE).

Member of the two-component regulatory system RT0550/RT0603. The protein is Putative response regulator NtrX-like of Rickettsia typhi (strain ATCC VR-144 / Wilmington).